The following is a 160-amino-acid chain: Nucleotide-binding protein TERTU_3542 (160 aa).

Belongs to the YajQ family.

Its function is as follows. Nucleotide-binding protein. This Teredinibacter turnerae (strain ATCC 39867 / T7901) protein is Nucleotide-binding protein TERTU_3542.